Consider the following 353-residue polypeptide: Uroporphyrinogen decarboxylase (353 aa).

Substrate contacts are provided by residues R27–R31, F46, D76, Y152, S207, and H321.

Belongs to the uroporphyrinogen decarboxylase family. In terms of assembly, homodimer.

It localises to the cytoplasm. It carries out the reaction uroporphyrinogen III + 4 H(+) = coproporphyrinogen III + 4 CO2. Its pathway is porphyrin-containing compound metabolism; protoporphyrin-IX biosynthesis; coproporphyrinogen-III from 5-aminolevulinate: step 4/4. Catalyzes the decarboxylation of four acetate groups of uroporphyrinogen-III to yield coproporphyrinogen-III. The protein is Uroporphyrinogen decarboxylase of Listeria monocytogenes serovar 1/2a (strain ATCC BAA-679 / EGD-e).